We begin with the raw amino-acid sequence, 231 residues long: 2-C-methyl-D-erythritol 4-phosphate cytidylyltransferase (231 aa).

This sequence belongs to the IspD/TarI cytidylyltransferase family. IspD subfamily.

It carries out the reaction 2-C-methyl-D-erythritol 4-phosphate + CTP + H(+) = 4-CDP-2-C-methyl-D-erythritol + diphosphate. Its pathway is isoprenoid biosynthesis; isopentenyl diphosphate biosynthesis via DXP pathway; isopentenyl diphosphate from 1-deoxy-D-xylulose 5-phosphate: step 2/6. Functionally, catalyzes the formation of 4-diphosphocytidyl-2-C-methyl-D-erythritol from CTP and 2-C-methyl-D-erythritol 4-phosphate (MEP). This chain is 2-C-methyl-D-erythritol 4-phosphate cytidylyltransferase, found in Bacillus licheniformis (strain ATCC 14580 / DSM 13 / JCM 2505 / CCUG 7422 / NBRC 12200 / NCIMB 9375 / NCTC 10341 / NRRL NRS-1264 / Gibson 46).